The chain runs to 144 residues: Cytochrome c oxidase subunit 4 isoform 1, mitochondrial (144 aa).

Topologically, residues 1 to 73 (SVVKSEDFSL…SFAEMNRGSN (73 aa)) are mitochondrial matrix. At lysine 4 the chain carries N6-acetyllysine; alternate. The residue at position 4 (lysine 4) is an N6-succinyllysine; alternate. Lysine 28 bears the N6-acetyllysine mark. Phosphoserine occurs at positions 31 and 33. An N6-acetyllysine; alternate modification is found at lysine 35. Residue lysine 35 is modified to N6-succinyllysine; alternate. The residue at position 42 (lysine 42) is an N6-acetyllysine. A helical membrane pass occupies residues 74–99 (EWKTVVGGAMFFIGFTALIIMWQKRH). Residues 100–144 (VYGPLPQSFDKEWVAKQTKRMLDMKVNPIQGLASKWDYEKNEWKK) are Mitochondrial intermembrane-facing.

Belongs to the cytochrome c oxidase IV family. In terms of assembly, component of the cytochrome c oxidase (complex IV, CIV), a multisubunit enzyme composed of 14 subunits. The complex is composed of a catalytic core of 3 subunits MT-CO1, MT-CO2 and MT-CO3, encoded in the mitochondrial DNA, and 11 supernumerary subunits COX4I, COX5A, COX5B, COX6A, COX6B, COX6C, COX7A, COX7B, COX7C, COX8 and NDUFA4, which are encoded in the nuclear genome. The complex exists as a monomer or a dimer and forms supercomplexes (SCs) in the inner mitochondrial membrane with NADH-ubiquinone oxidoreductase (complex I, CI) and ubiquinol-cytochrome c oxidoreductase (cytochrome b-c1 complex, complex III, CIII), resulting in different assemblies (supercomplex SCI(1)III(2)IV(1) and megacomplex MCI(2)III(2)IV(2)). Interacts with PHB2; the interaction decreases in absence of SPHK2. Interacts with AFG1L. Interacts with ABCB7; this interaction allows the regulation of cellular iron homeostasis and cellular reactive oxygen species (ROS) levels in cardiomyocytes. Interacts with FLVCR2; this interaction occurs in the absence of heme and is disrupted upon heme binding. Interacts with IRGC.

The protein localises to the mitochondrion inner membrane. It functions in the pathway energy metabolism; oxidative phosphorylation. In terms of biological role, component of the cytochrome c oxidase, the last enzyme in the mitochondrial electron transport chain which drives oxidative phosphorylation. The respiratory chain contains 3 multisubunit complexes succinate dehydrogenase (complex II, CII), ubiquinol-cytochrome c oxidoreductase (cytochrome b-c1 complex, complex III, CIII) and cytochrome c oxidase (complex IV, CIV), that cooperate to transfer electrons derived from NADH and succinate to molecular oxygen, creating an electrochemical gradient over the inner membrane that drives transmembrane transport and the ATP synthase. Cytochrome c oxidase is the component of the respiratory chain that catalyzes the reduction of oxygen to water. Electrons originating from reduced cytochrome c in the intermembrane space (IMS) are transferred via the dinuclear copper A center (CU(A)) of subunit 2 and heme A of subunit 1 to the active site in subunit 1, a binuclear center (BNC) formed by heme A3 and copper B (CU(B)). The BNC reduces molecular oxygen to 2 water molecules using 4 electrons from cytochrome c in the IMS and 4 protons from the mitochondrial matrix. The sequence is that of Cytochrome c oxidase subunit 4 isoform 1, mitochondrial (COX4I1) from Pongo pygmaeus (Bornean orangutan).